Consider the following 474-residue polypeptide: Gamma-aminobutyric acid receptor subunit beta-1 (474 aa).

The first 25 residues, 1–25 (MWTVQNRESLGLLSFPVMIAMVCCA), serve as a signal peptide directing secretion. At 26–245 (HSANEPSNMS…SFRLKRNIGY (220 aa)) the chain is on the extracellular side. N33 and N105 each carry an N-linked (GlcNAc...) asparagine glycan. Y122 is a binding site for histamine. C161 and C175 form a disulfide bridge. N174 carries N-linked (GlcNAc...) asparagine glycosylation. Residues 181–182 (SY) and T227 contribute to the histamine site. Y182 and T227 together coordinate 4-aminobutanoate. 3 helical membrane passes run 246–267 (FILQ…SFWI), 271–293 (ASAA…STHL), and 305–327 (AIDI…YAFV). Topologically, residues 328 to 451 (NYIFFGKGPQ…DLTDVNSIDK (124 aa)) are cytoplasmic. Residues 452–473 (WSRMFFPITFSLFNVVYWLYYV) form a helical membrane-spanning segment.

This sequence belongs to the ligand-gated ion channel (TC 1.A.9) family. Gamma-aminobutyric acid receptor (TC 1.A.9.5) subfamily. GABRB1 sub-subfamily. In terms of assembly, heteropentamer, formed by a combination of alpha (GABRA1-6), beta (GABRB1-3), gamma (GABRG1-3), delta (GABRD), epsilon (GABRE), rho (GABRR1-3), pi (GABRP) and theta (GABRQ) chains, each subunit exhibiting distinct physiological and pharmacological properties. Binds UBQLN1.

The protein localises to the postsynaptic cell membrane. Its subcellular location is the cell membrane. The catalysed reaction is chloride(in) = chloride(out). With respect to regulation, potentiated by histamine. Functionally, beta subunit of the heteropentameric ligand-gated chloride channel gated by gamma-aminobutyric acid (GABA), a major inhibitory neurotransmitter in the brain. GABA-gated chloride channels, also named GABA(A) receptors (GABAAR), consist of five subunits arranged around a central pore and contain GABA active binding site(s) located at the alpha and beta subunit interface(s). When activated by GABA, GABAARs selectively allow the flow of chloride anions across the cell membrane down their electrochemical gradient. Chloride influx into the postsynaptic neuron following GABAAR opening decreases the neuron ability to generate a new action potential, thereby reducing nerve transmission. Beta-containing GABAARs can simultaneously bind GABA and histamine where histamine binds at the interface of two neighboring beta subunits, which may be involved in the regulation of sleep and wakefulness. The polypeptide is Gamma-aminobutyric acid receptor subunit beta-1 (GABRB1) (Bos taurus (Bovine)).